A 260-amino-acid chain; its full sequence is Putative ATP-binding protein BAB2_1147 (260 aa).

The ABC transporter domain maps to 5-228 (ISFNNVVMRY…DLPYPRTEAI (224 aa)). Residue 37–44 (GPSGCGKS) participates in ATP binding.

This sequence belongs to the ABC transporter superfamily. As to quaternary structure, the complex is composed of two ATP-binding proteins (BAB2_1147), two transmembrane proteins (BAB2_1148) and a solute-binding protein (BAB2_1146).

It is found in the cell inner membrane. Probably part of an ABC transporter complex. Probably Responsible for energy coupling to the transport system. This Brucella abortus (strain 2308) protein is Putative ATP-binding protein BAB2_1147.